The chain runs to 552 residues: Chaperonin GroEL (552 aa).

ATP contacts are provided by residues threonine 30–proline 33, lysine 51, aspartate 87–threonine 91, glycine 415, asparagine 479–alanine 481, and aspartate 495.

Belongs to the chaperonin (HSP60) family. In terms of assembly, forms a cylinder of 14 subunits composed of two heptameric rings stacked back-to-back. Interacts with the co-chaperonin GroES.

The protein localises to the cytoplasm. It carries out the reaction ATP + H2O + a folded polypeptide = ADP + phosphate + an unfolded polypeptide.. In terms of biological role, together with its co-chaperonin GroES, plays an essential role in assisting protein folding. The GroEL-GroES system forms a nano-cage that allows encapsulation of the non-native substrate proteins and provides a physical environment optimized to promote and accelerate protein folding. The sequence is that of Chaperonin GroEL from Nitrosospira multiformis (strain ATCC 25196 / NCIMB 11849 / C 71).